A 249-amino-acid chain; its full sequence is dTDP-4-amino-2,3,4,6-tetradeoxy-D-glucose N,N-dimethyltransferase (249 aa).

A substrate-binding site is contributed by arginine 30. S-adenosyl-L-methionine-binding positions include alanine 59, glutamate 80, and aspartate 102–isoleucine 103. Substrate contacts are provided by residues threonine 165, arginine 178–serine 182, and arginine 241.

This sequence belongs to the methyltransferase TylM1/DesVI family. As to quaternary structure, homodimer. Mg(2+) serves as cofactor.

It carries out the reaction dTDP-4-amino-2,3,4,6-tetradeoxy-alpha-D-erythro-hexopyranose + 2 S-adenosyl-L-methionine = dTDP-alpha-D-forosamine + 2 S-adenosyl-L-homocysteine + 2 H(+). Involved in the biosynthesis of forosamine ((4-dimethylamino)-2,3,4,6-tetradeoxy-alpha-D-threo-hexopyranose), a highly deoxygenated sugar component of several bioactive natural products such as the insecticidal spinosyns A and D. Catalyzes the dimethylation of the C-4 amino group from dTDP-4-amino-2,3,4,6-tetradeoxy-alpha-D-glucose to yield dTDP-D-forosamine. In Saccharopolyspora spinosa, this protein is dTDP-4-amino-2,3,4,6-tetradeoxy-D-glucose N,N-dimethyltransferase.